Consider the following 119-residue polypeptide: NADH-quinone oxidoreductase subunit A (119 aa).

Transmembrane regions (helical) follow at residues 7–27 (FPVL…VSIG), 63–83 (LVAI…PWGV), and 88–108 (IGWP…LGFA).

Belongs to the complex I subunit 3 family. As to quaternary structure, NDH-1 is composed of 14 different subunits. Subunits NuoA, H, J, K, L, M, N constitute the membrane sector of the complex.

The protein resides in the cell inner membrane. It carries out the reaction a quinone + NADH + 5 H(+)(in) = a quinol + NAD(+) + 4 H(+)(out). In terms of biological role, NDH-1 shuttles electrons from NADH, via FMN and iron-sulfur (Fe-S) centers, to quinones in the respiratory chain. The immediate electron acceptor for the enzyme in this species is believed to be ubiquinone. Couples the redox reaction to proton translocation (for every two electrons transferred, four hydrogen ions are translocated across the cytoplasmic membrane), and thus conserves the redox energy in a proton gradient. The polypeptide is NADH-quinone oxidoreductase subunit A (Paraburkholderia xenovorans (strain LB400)).